Here is a 109-residue protein sequence, read N- to C-terminus: Parvalbumin beta (109 aa).

2 consecutive EF-hand domains span residues 38 to 73 (KSKD…FDGK) and 77 to 109 (LTDK…VTKG). Ca(2+) is bound by residues Asp51, Asp53, Ser55, Tyr57, Glu59, Glu62, Asp90, Asp92, Asp94, Lys96, and Glu101.

Belongs to the parvalbumin family.

Its function is as follows. In muscle, parvalbumin is thought to be involved in relaxation after contraction. It binds two calcium ions. This chain is Parvalbumin beta, found in Boa constrictor (Boa).